We begin with the raw amino-acid sequence, 455 residues long: Bleomycin hydrolase (455 aa).

An N-acetylmethionine modification is found at M1. Catalysis depends on residues C73 and H372. K391 is subject to N6-acetyllysine. N396 is an active-site residue.

Belongs to the peptidase C1 family. Homohexamer. Interacts with NUDT12 (via ANK repeats).

It localises to the cytoplasm. The protein resides in the cytoplasmic granule. The enzyme catalyses Inactivates bleomycin B2 (a cytotoxic glycometallopeptide) by hydrolysis of a carboxyamide bond of beta-aminoalanine, but also shows general aminopeptidase activity. The specificity varies somewhat with source, but amino acid arylamides of Met, Leu and Ala are preferred.. The normal physiological role of BLM hydrolase is unknown, but it catalyzes the inactivation of the antitumor drug BLM (a glycopeptide) by hydrolyzing the carboxamide bond of its B-aminoalaninamide moiety thus protecting normal and malignant cells from BLM toxicity. In Mus musculus (Mouse), this protein is Bleomycin hydrolase (Blmh).